The sequence spans 181 residues: Beta-lactoglobulin-2 (181 aa).

A signal peptide spans 1–18; the sequence is MKCLLLALGLSLMCGNQA. Disulfide bonds link cysteine 84-cysteine 179 and cysteine 124-cysteine 138.

The protein belongs to the calycin superfamily. Lipocalin family. As to quaternary structure, monomer.

The protein resides in the secreted. Functionally, lactoglobulin is the primary component of whey, it binds retinol and is probably involved in the transport of that molecule. The polypeptide is Beta-lactoglobulin-2 (LGB2) (Equus caballus (Horse)).